A 100-amino-acid chain; its full sequence is Large ribosomal subunit protein uL23 (100 aa).

This sequence belongs to the universal ribosomal protein uL23 family. Part of the 50S ribosomal subunit. Contacts protein L29, and trigger factor when it is bound to the ribosome.

In terms of biological role, one of the early assembly proteins it binds 23S rRNA. One of the proteins that surrounds the polypeptide exit tunnel on the outside of the ribosome. Forms the main docking site for trigger factor binding to the ribosome. The protein is Large ribosomal subunit protein uL23 of Pseudoalteromonas translucida (strain TAC 125).